Reading from the N-terminus, the 435-residue chain is Adenylosuccinate synthetase (435 aa).

Residues 19-25 and 49-51 each bind GTP; these read GDEGKGK and GHT. The active-site Proton acceptor is the aspartate 20. Mg(2+)-binding residues include aspartate 20 and glycine 49. IMP-binding positions include 20 to 23, 47 to 50, threonine 139, arginine 153, asparagine 233, threonine 248, and arginine 312; these read DEGK and NAGH. Histidine 50 acts as the Proton donor in catalysis. Residue 308–314 coordinates substrate; that stretch reads VTTGRKR. GTP contacts are provided by residues arginine 314, 340-342, and 422-424; these read KLD and GVG.

Belongs to the adenylosuccinate synthetase family. In terms of assembly, homodimer. It depends on Mg(2+) as a cofactor.

Its subcellular location is the cytoplasm. The enzyme catalyses IMP + L-aspartate + GTP = N(6)-(1,2-dicarboxyethyl)-AMP + GDP + phosphate + 2 H(+). The protein operates within purine metabolism; AMP biosynthesis via de novo pathway; AMP from IMP: step 1/2. Functionally, plays an important role in the de novo pathway and in the salvage pathway of purine nucleotide biosynthesis. Catalyzes the first committed step in the biosynthesis of AMP from IMP. The chain is Adenylosuccinate synthetase from Brugia malayi (Filarial nematode worm).